The sequence spans 507 residues: Cobyric acid synthase (507 aa).

A GATase cobBQ-type domain is found at 259-456; that stretch reads EIQIAVIKLP…LHGIFDNGTW (198 aa). The active-site Nucleophile is the Cys340. His448 is an active-site residue.

It belongs to the CobB/CobQ family. CobQ subfamily.

The protein operates within cofactor biosynthesis; adenosylcobalamin biosynthesis. Catalyzes amidations at positions B, D, E, and G on adenosylcobyrinic A,C-diamide. NH(2) groups are provided by glutamine, and one molecule of ATP is hydrogenolyzed for each amidation. This chain is Cobyric acid synthase, found in Prochlorococcus marinus (strain SARG / CCMP1375 / SS120).